A 229-amino-acid polypeptide reads, in one-letter code: UPF0441 protein YE3666 (229 aa).

Disordered stretches follow at residues 101 to 125 (PAQAGMVPTSSSSSETTAAAPQQSG) and 190 to 229 (KPAVTNTITRGGFGESVAKQSSMQRSAATSSKTSTRSMGG). 2 stretches are compositionally biased toward low complexity: residues 109–120 (TSSSSSETTAAA) and 214–229 (RSAATSSKTSTRSMGG).

The protein belongs to the UPF0441 family.

The polypeptide is UPF0441 protein YE3666 (Yersinia enterocolitica serotype O:8 / biotype 1B (strain NCTC 13174 / 8081)).